The chain runs to 89 residues: Small ribosomal subunit protein uS15 (89 aa).

It belongs to the universal ribosomal protein uS15 family. As to quaternary structure, part of the 30S ribosomal subunit. Forms a bridge to the 50S subunit in the 70S ribosome, contacting the 23S rRNA.

Functionally, one of the primary rRNA binding proteins, it binds directly to 16S rRNA where it helps nucleate assembly of the platform of the 30S subunit by binding and bridging several RNA helices of the 16S rRNA. Forms an intersubunit bridge (bridge B4) with the 23S rRNA of the 50S subunit in the ribosome. In Chlamydia caviae (strain ATCC VR-813 / DSM 19441 / 03DC25 / GPIC) (Chlamydophila caviae), this protein is Small ribosomal subunit protein uS15.